A 273-amino-acid polypeptide reads, in one-letter code: Dermonecrotic toxin LapSicTox-alphaIB1c (273 aa).

The active site involves H5. Residues E25 and D27 each contribute to the Mg(2+) site. The active-site Nucleophile is H41. 2 cysteine pairs are disulfide-bonded: C45–C51 and C47–C190. D85 serves as a coordination point for Mg(2+). N-linked (GlcNAc...) asparagine glycosylation is present at N250.

This sequence belongs to the arthropod phospholipase D family. Class II subfamily. Mg(2+) serves as cofactor. Expressed by the venom gland.

The protein localises to the secreted. It catalyses the reaction an N-(acyl)-sphingosylphosphocholine = an N-(acyl)-sphingosyl-1,3-cyclic phosphate + choline. It carries out the reaction an N-(acyl)-sphingosylphosphoethanolamine = an N-(acyl)-sphingosyl-1,3-cyclic phosphate + ethanolamine. The catalysed reaction is a 1-acyl-sn-glycero-3-phosphocholine = a 1-acyl-sn-glycero-2,3-cyclic phosphate + choline. The enzyme catalyses a 1-acyl-sn-glycero-3-phosphoethanolamine = a 1-acyl-sn-glycero-2,3-cyclic phosphate + ethanolamine. Functionally, dermonecrotic toxins cleave the phosphodiester linkage between the phosphate and headgroup of certain phospholipids (sphingolipid and lysolipid substrates), forming an alcohol (often choline) and a cyclic phosphate. This toxin acts on sphingomyelin (SM). It may also act on ceramide phosphoethanolamine (CPE), lysophosphatidylcholine (LPC) and lysophosphatidylethanolamine (LPE), but not on lysophosphatidylserine (LPS), and lysophosphatidylglycerol (LPG). It acts by transphosphatidylation, releasing exclusively cyclic phosphate products as second products. Induces dermonecrosis, hemolysis, increased vascular permeability, edema, inflammatory response, and platelet aggregation. The polypeptide is Dermonecrotic toxin LapSicTox-alphaIB1c (Loxosceles apachea (Apache recluse spider)).